The primary structure comprises 164 residues: C-phycoerythrin alpha chain (164 aa).

Positions 82 and 139 each coordinate (2R,3E)-phycoerythrobilin.

This sequence belongs to the phycobiliprotein family. As to quaternary structure, heterodimer of an alpha and a beta chain. In terms of processing, contains two covalently linked bilin chromophores.

The protein localises to the cellular thylakoid membrane. In terms of biological role, light-harvesting photosynthetic bile pigment-protein from the phycobiliprotein complex. The chain is C-phycoerythrin alpha chain (cpeA) from Synechocystis sp. (strain PCC 6701).